The sequence spans 81 residues: Cytotoxin 4a (81 aa).

The first 21 residues, 1 to 21 (MKTLLLTLVVVTIVCLDLGYT), serve as a signal peptide directing secretion. 4 disulfide bridges follow: Cys-24–Cys-42, Cys-35–Cys-59, Cys-63–Cys-74, and Cys-75–Cys-80.

The protein belongs to the three-finger toxin family. Short-chain subfamily. Type IA cytotoxin sub-subfamily. Monomer in solution; Homodimer and oligomer in the presence of negatively charged lipids forming a pore with a size ranging between 20 and 30 Angstroms. In terms of tissue distribution, expressed by the venom gland.

The protein localises to the secreted. The protein resides in the target cell membrane. In terms of biological role, shows cytolytic activity on many different cells by forming pore in lipid membranes. In vivo, increases heart rate or kills the animal by cardiac arrest. In addition, it binds to heparin with high affinity, interacts with Kv channel-interacting protein 1 (KCNIP1) in a calcium-independent manner, and binds to integrin alpha-V/beta-3 (ITGAV/ITGB3) with moderate affinity. This chain is Cytotoxin 4a, found in Naja sputatrix (Malayan spitting cobra).